A 1649-amino-acid chain; its full sequence is Cortactin-binding protein 2 (1649 aa).

The interval 1–27 (MATDSASCEPDLSRAPGDAEGATAEAA) is disordered. Over residues 15 to 25 (APGDAEGATAE) the composition is skewed to low complexity. Positions 118 to 275 (RKMQERMSAQ…EQMKKGNDGK (158 aa)) form a coiled coil. Disordered stretches follow at residues 322–439 (PLSV…PGLN), 451–476 (GNAN…PTSR), and 492–604 (ALSR…LPPK). Residues 330-342 (STGSPLVSTNTKG) are compositionally biased toward polar residues. A compositionally biased stretch (low complexity) spans 395–416 (STPSTPSGTAPAAAQTLGAAPQ). Positions 492 to 503 (ALSRFTSPQAGA) are enriched in polar residues. An Asymmetric dimethylarginine modification is found at Arg495. 6 ANK repeats span residues 699 to 729 (GRPT…DINY), 733 to 762 (DSHS…RVDA), 766 to 795 (NGFT…NINH), 799 to 828 (GGQT…DRSI), 832 to 861 (DGWT…PAPG), and 901 to 931 (EGWT…EPER). The tract at residues 1438–1471 (SAAWRKVNTSPRKKPGHFSSPMWNKPDLKHEGMR) is disordered. Ser1510 carries the phosphoserine modification. Residues 1527–1649 (KSESDISKIA…KHEHVEKRNK (123 aa)) are disordered. The span at 1528 to 1546 (SESDISKIADSREDLRTFD) shows a compositional bias: basic and acidic residues. Composition is skewed to polar residues over residues 1547 to 1557 (SSRTNPVTSAP), 1571 to 1584 (PLSS…SNSK), and 1621 to 1630 (NTRQLEINNN). Residues 1631–1649 (SKEENWNVDKHEHVEKRNK) are compositionally biased toward basic and acidic residues.

Interacts with CTTN/cortactin SH3 domain. Interacts with STRN, STRN4/zinedin and MOB4/phocein; this interactions mediate the association with the STRIPAK core complex and may regulate dendritic spine distribution of the STRIPAK complex in hippocampal neurons. Activation of glutamate receptors weakens the interaction with STRN and STRN4.

Its subcellular location is the cytoplasm. The protein localises to the cell cortex. The protein resides in the cell projection. It is found in the dendritic spine. Regulates the dendritic spine distribution of CTTN/cortactin in hippocampal neurons, and thus controls dendritic spinogenesis and dendritic spine maintenance. Associates with the striatin-interacting phosphatase and kinase (STRIPAK) core complex to regulate dendritic spine distribution of the STRIPAK complex in hippocampal neurons. This chain is Cortactin-binding protein 2 (Cttnbp2), found in Rattus norvegicus (Rat).